A 185-amino-acid polypeptide reads, in one-letter code: Guanylate kinase (185 aa).

Positions Thr-3–Glu-181 constitute a Guanylate kinase-like domain. Ala-10 to Ser-17 is a binding site for ATP.

It belongs to the guanylate kinase family.

It is found in the cytoplasm. The catalysed reaction is GMP + ATP = GDP + ADP. Its function is as follows. Essential for recycling GMP and indirectly, cGMP. This is Guanylate kinase from Bdellovibrio bacteriovorus (strain ATCC 15356 / DSM 50701 / NCIMB 9529 / HD100).